The chain runs to 91 residues: Protein SPATA45 homolog (91 aa).

Residues arginine 42–tyrosine 91 are disordered. Residues glycine 51–aspartate 70 show a composition bias toward polar residues. Over residues proline 76 to tyrosine 91 the composition is skewed to basic and acidic residues.

This sequence belongs to the SPATA45 family.

In Nematostella vectensis (Starlet sea anemone), this protein is Protein SPATA45 homolog.